A 52-amino-acid chain; its full sequence is Defensin-like protein 2B (52 aa).

4 disulfide bridges follow: Cys-4/Cys-52, Cys-16/Cys-37, Cys-22/Cys-46, and Cys-26/Cys-48.

Forms oligomers in its native state.

Functionally, possesses antifungal activity sensitive to inorganic cations. The protein is Defensin-like protein 2B of Sinapis alba (White mustard).